A 580-amino-acid polypeptide reads, in one-letter code: Glutamyl-tRNA(Gln) amidotransferase subunit B-2, chloroplastic/mitochondrial (580 aa).

2 stretches are compositionally biased toward low complexity: residues 20 to 35 and 42 to 59; these read RRDATAAASTSAATVS and AVSTTTTTSSSSSSSAAV. The disordered stretch occupies residues 20–64; it reads RRDATAAASTSAATVSRGRRARAVSTTTTTSSSSSSSAAVDARDA.

This sequence belongs to the GatB/GatE family. GatB subfamily. In terms of assembly, subunit of the heterotrimeric GatCAB amidotransferase (AdT) complex, composed of A, B and C subunits.

It is found in the mitochondrion. Its subcellular location is the plastid. The protein resides in the chloroplast. The enzyme catalyses L-glutamyl-tRNA(Gln) + L-glutamine + ATP + H2O = L-glutaminyl-tRNA(Gln) + L-glutamate + ADP + phosphate + H(+). Allows the formation of correctly charged Gln-tRNA(Gln) through the transamidation of misacylated Glu-tRNA(Gln) in chloroplasts and mitochondria. The reaction takes place in the presence of glutamine and ATP through an activated gamma-phospho-Glu-tRNA(Gln). This chain is Glutamyl-tRNA(Gln) amidotransferase subunit B-2, chloroplastic/mitochondrial, found in Micromonas pusilla (strain CCMP1545) (Picoplanktonic green alga).